The primary structure comprises 507 residues: ATP synthase subunit alpha, chloroplastic (507 aa).

170–177 (GDRQTGKT) provides a ligand contact to ATP. Position 257 is a phosphothreonine (T257).

Belongs to the ATPase alpha/beta chains family. In terms of assembly, F-type ATPases have 2 components, CF(1) - the catalytic core - and CF(0) - the membrane proton channel. CF(1) has five subunits: alpha(3), beta(3), gamma(1), delta(1), epsilon(1). CF(0) has four main subunits: a, b, b' and c.

It localises to the plastid. It is found in the chloroplast thylakoid membrane. It catalyses the reaction ATP + H2O + 4 H(+)(in) = ADP + phosphate + 5 H(+)(out). Its function is as follows. Produces ATP from ADP in the presence of a proton gradient across the membrane. The alpha chain is a regulatory subunit. This chain is ATP synthase subunit alpha, chloroplastic, found in Lobularia maritima (Sweet alyssum).